A 356-amino-acid chain; its full sequence is (+)-(1(10)E,4E,6S,7R)-germacradien-6-ol synthase (356 aa).

Residues Asp86 and Asp91 each coordinate Mg(2+). The short motif at 86–91 (DDEYCD) is the DDXXXD motif element. Residue Arg181 participates in substrate binding. The Mg(2+) site is built by Asn227 and Ser231. Lys234 is a substrate binding site. Glu235 is a Mg(2+) binding site. 314–315 (RY) lines the substrate pocket.

The protein belongs to the terpene synthase family. It depends on Mg(2+) as a cofactor.

It catalyses the reaction (2E,6E)-farnesyl diphosphate + H2O = (+)-(1(10)E,4E,6S,7R)-germacradien-6-ol + diphosphate. It functions in the pathway secondary metabolite biosynthesis; terpenoid biosynthesis. Its function is as follows. Catalyzes the conversion of (2E,6E)-farnesyl diphosphate (FPP) to yield the sesquiterpene (+)-(1(10)E,4E,6S,7R)-germacradien-6-ol via a putative 1,10-cyclization, which could require the abstraction of the pyrophosphate from FPP to yield the (E,E)-germacradienyl cation. The only accepted substrate is farnesyl diphosphate (FPP). In Streptomyces pratensis (strain ATCC 33331 / IAF-45CD), this protein is (+)-(1(10)E,4E,6S,7R)-germacradien-6-ol synthase.